The primary structure comprises 256 residues: tRNA (guanine-N(1)-)-methyltransferase (256 aa).

S-adenosyl-L-methionine-binding positions include glycine 113 and 132-137 (VGDYVL).

Belongs to the RNA methyltransferase TrmD family. In terms of assembly, homodimer.

It localises to the cytoplasm. It catalyses the reaction guanosine(37) in tRNA + S-adenosyl-L-methionine = N(1)-methylguanosine(37) in tRNA + S-adenosyl-L-homocysteine + H(+). Specifically methylates guanosine-37 in various tRNAs. The sequence is that of tRNA (guanine-N(1)-)-methyltransferase from Coprothermobacter proteolyticus (strain ATCC 35245 / DSM 5265 / OCM 4 / BT).